A 91-amino-acid polypeptide reads, in one-letter code: Anther-specific protein RTS (91 aa).

An N-terminal signal peptide occupies residues 1-21; the sequence is MVRVGAAAAVLVLAAAAAAMA.

Its function is as follows. Required for tapetum and pollen development. The protein is Anther-specific protein RTS of Oryza sativa subsp. japonica (Rice).